Reading from the N-terminus, the 272-residue chain is 27-O-demethylrifamycin SV methyltransferase (272 aa).

Residues serine 89, glutamine 94, 117 to 118 (DA), leucine 134, and histidine 139 contribute to the S-adenosyl-L-methionine site.

This sequence belongs to the class I-like SAM-binding methyltransferase superfamily. As to quaternary structure, exists probably as a trimer.

It carries out the reaction 27-O-demethylrifamycin SV + S-adenosyl-L-methionine = rifamycin SV + S-adenosyl-L-homocysteine + H(+). It functions in the pathway antibiotic biosynthesis; rifamycin B biosynthesis. With respect to regulation, slightly inhibited by Ca(2+) and Mg(2+). Strongly inhibited by Zn(2+), Ni(2+) and Co(2+). Its function is as follows. Catalyzes the methylation of 27-O-demethylrifamycin SV (DMRSV) to rifamycin SV. The sequence is that of 27-O-demethylrifamycin SV methyltransferase from Amycolatopsis mediterranei (strain S699) (Nocardia mediterranei).